A 517-amino-acid polypeptide reads, in one-letter code: Endoglycoceramidase (517 aa).

An N-terminal signal peptide occupies residues 1-17 (MISVALIILFLAKVISG). An N-linked (GlcNAc...) asparagine glycan is attached at N99. E230 acts as the Proton donor in catalysis. N298, N380, and N393 each carry an N-linked (GlcNAc...) asparagine glycan.

This sequence belongs to the glycosyl hydrolase 5 (cellulase A) family. Expressed uniformly in digestive cells, tentacles and peduncle regions suggesting expression in the endoderm throughout the whole body (at protein level).

It localises to the secreted. It catalyses the reaction an oligoglycosyl-(1-&gt;4)-beta-D-glucosyl-(1&lt;-&gt;1)-ceramide + H2O = an oligoglycosyl-(1-&gt;4)-D-glucose + an N-acyl-sphingoid base. Cu(2+), zinc, manganese, calcium, magnesium and EDTA have no significant effects on enzyme activity. Enzyme requires presence of detergents such as Triton X-100 and Lubrol PX for the hydrolysis of glycosphingolipids. Taurodeoxycholate strongly inhibits the enzyme activity. Functionally, hydrolysis of the glycosidic linkage between oligosaccharides and ceramides of glycosphingolipids, optimal substrates appear to be the glycosphingolipids with a gangliotetraose structure. The polypeptide is Endoglycoceramidase (Hydra vulgaris (Hydra)).